The following is a 70-amino-acid chain: Putative peptide YY-3 (70 aa).

A signal peptide spans 1 to 23 (MVSVCRPWPAVAIALLALLVCLG).

The protein belongs to the NPY family.

The protein resides in the secreted. The sequence is that of Putative peptide YY-3 (PYY3) from Homo sapiens (Human).